The following is a 926-amino-acid chain: MKKTTALFLLIFSLIACQSLELSPNNNLPFDPNIQHGKLSNGLQYFVLKNTEPKERVYIRLVINAGSMHEDDDQKGIAHLVEHMAFNGSKKYPENQIINALEKLGMKFARDINAFTDFENTVYTLNLDSNNQQKLELAFDVINEWMNNITFLPKDVDGERGVVQEEWRRRLSPMLRIGNKKSAIEMAGSRYVLRDPIGDMDIIKTISAKRVADFYHKWYRPDNMSVIIVGDIDTKQVVKLLKQNLSQENPITKTTLEKIDFNIPLINKWRLDSISEQGTTIPSIELSFFENTIETNTLASYKQELIQQITTRLLNLRLQQWEKETENGVDSANFYRTHLGKETLQSIFSLQLIDTQYSKTIDKLFAFIASIKQQGFTQNELSGEIKRLTQLNEKQLNIRSGSLKIADDLITSVANKQVVLSVNDRYELNKRFLSQITLADLQRTLNQTLALKAKLLLITQPLPQKALPFDVAEIETRWNNVMEMQQHQWDEKKQIEKLPHLTFNTGSLSQEKYWDRGDIYEFRLSNGSKLIYHYSDKTPNQVHFRAVTQGGLRSIPNKDYHLLRAAVSVVDETGVGELSLSAVNQIFSRDPLVIATVIDDDKQGFTGVSKPKDLENLLTLFRLKLRSSPISDLALEKYRRETRDYFKQIDLETQFMQAVSKLRFPNIETVYTQKQAQQLSFDKNQLNNAYQHYILDKTDFTYFIIGDIELNQVKKLAERYLASIESKTQIRHFVPTIIHTPTQSFIMNGLKEPRADVEIYLTADNTWRTEQKYLFNILADIVQEKLRLILREKVSGIYSVNSWFMQDVYAPQIEGKIEFSCDPKRVEELTYLTNQVLDDIIKNGIDENLLRKKLAEQHTQIRREFDSLVSIASIIEESYWQQDNPDAIYTYQHLDQLATKATIDALAQKALKKSGRFVSILKAASY.

H79 lines the Zn(2+) pocket. Residue E82 is the Proton acceptor of the active site. Positions 83 and 159 each coordinate Zn(2+).

It belongs to the peptidase M16 family. Requires Zn(2+) as cofactor.

The polypeptide is Probable zinc protease PqqL (pqqL) (Haemophilus influenzae (strain ATCC 51907 / DSM 11121 / KW20 / Rd)).